We begin with the raw amino-acid sequence, 319 residues long: Probable arabinan endo-1,5-alpha-L-arabinosidase A (319 aa).

Positions 1 to 19 (MYLQSSLALVLLRAAVVHG) are cleaved as a signal peptide. Residue aspartate 34 is the Proton acceptor of the active site. N-linked (GlcNAc...) asparagine glycosylation occurs at asparagine 53. Glutamate 198 serves as the catalytic Proton donor.

The protein belongs to the glycosyl hydrolase 43 family.

The protein localises to the secreted. It carries out the reaction Endohydrolysis of (1-&gt;5)-alpha-arabinofuranosidic linkages in (1-&gt;5)-arabinans.. It participates in glycan metabolism; L-arabinan degradation. In terms of biological role, endo-1,5-alpha-L-arabinanase involved in degradation of pectin. Its preferred substrate is linear 1,5-alpha-L-arabinan. The sequence is that of Probable arabinan endo-1,5-alpha-L-arabinosidase A (abnA) from Aspergillus flavus (strain ATCC 200026 / FGSC A1120 / IAM 13836 / NRRL 3357 / JCM 12722 / SRRC 167).